Reading from the N-terminus, the 346-residue chain is Propane 2-monooxygenase, reductase component (346 aa).

The 2Fe-2S ferredoxin-type domain occupies 5–94 (HKISFEPVDI…DCEIELLNFD (90 aa)). 4 residues coordinate [2Fe-2S] cluster: cysteine 39, cysteine 44, cysteine 46, and cysteine 78. The 102-residue stretch at 104 to 205 (IQDVTTKVAA…NGPYGSCTLR (102 aa)) folds into the FAD-binding FR-type domain.

The protein belongs to the bacterial ring-hydroxylating dioxygenase ferredoxin reductase family. In terms of assembly, the propane 2-monooxygenase multicomponent enzyme system is composed of an electron transfer component and a monooxygenase component interacting with the effector protein PrmD. The electron transfer component is composed of a reductase (PrmB), and the monooxygenase component is formed by a large subunit (PrmA) and a small subunit (PrmC). Requires FAD as cofactor. The cofactor is [2Fe-2S] cluster.

Its function is as follows. Reductase component of the propane 2-monooxygenase multicomponent enzyme system which is involved in the degradation of propane via the O2-dependent hydroxylation of propane. Reductase catalyzes the transfer of electrons from NADH or NADPH to monooxygenase. The sequence is that of Propane 2-monooxygenase, reductase component from Gordonia sp. (strain TY-5).